The chain runs to 111 residues: Ig kappa chain V-III region PC 7940 (111 aa).

Positions 1–23 are framework-1; it reads DIVLTQSPASLAVSLGQRATISC. A disulfide bond links C23 and C92. Positions 24–38 are complementarity-determining-1; it reads RASKSVSAFGYSYMH. Residues 39 to 53 are framework-2; it reads WYQQKPGQPPKLLIY. A complementarity-determining-2 region spans residues 54–60; the sequence is LASNLES. Positions 61–92 are framework-3; it reads GVPARFSGSGSGTDFTLNIHPVEEEDAVTYYC. The tract at residues 93 to 101 is complementarity-determining-3; that stretch reads QHSRELPPT. The framework-4 stretch occupies residues 102 to 111; that stretch reads FGGGTKLEIK.

The chain is Ig kappa chain V-III region PC 7940 from Mus musculus (Mouse).